The following is a 65-amino-acid chain: Putative beta-neurotoxin RjAa12 (65 aa).

Positions 1–64 (KEGYPVGRDG…VWDSSTNKCG (64 aa)) constitute an LCN-type CS-alpha/beta domain. 4 disulfide bridges follow: C11–C63, C15–C37, C22–C44, and C26–C46.

This sequence belongs to the long (4 C-C) scorpion toxin superfamily. Sodium channel inhibitor family. Beta subfamily. In terms of tissue distribution, expressed by the venom gland.

It is found in the secreted. In terms of biological role, beta toxins bind voltage-independently at site-4 of sodium channels (Nav) and shift the voltage of activation toward more negative potentials thereby affecting sodium channel activation and promoting spontaneous and repetitive firing. The protein is Putative beta-neurotoxin RjAa12 of Rhopalurus junceus (Caribbean blue scorpion).